Reading from the N-terminus, the 131-residue chain is Modulator protein MzrA (131 aa).

Topologically, residues 1-14 (MSIRWLFPKLTPRK) are cytoplasmic. A helical transmembrane segment spans residues 15 to 31 (VARILILLALPIIALTQ). The Periplasmic segment spans residues 32–131 (SQSLRHSQDD…KLTQKQSKLG (100 aa)).

Belongs to the MzrA family. Interacts with EnvZ.

The protein localises to the cell inner membrane. In terms of biological role, modulates the activity of the EnvZ/OmpR two-component regulatory system, probably by directly modulating EnvZ enzymatic activity and increasing stability of phosphorylated OmpR. This chain is Modulator protein MzrA, found in Pectobacterium carotovorum subsp. carotovorum (strain PC1).